We begin with the raw amino-acid sequence, 514 residues long: 2,3-bisphosphoglycerate-independent phosphoglycerate mutase (514 aa).

2 residues coordinate Mn(2+): aspartate 13 and serine 63. The active-site Phosphoserine intermediate is the serine 63. Substrate is bound by residues histidine 124, 154 to 155 (RD), arginine 186, arginine 192, 258 to 261 (RADR), and lysine 332. Mn(2+) contacts are provided by aspartate 399, histidine 403, aspartate 440, histidine 441, and histidine 459.

Belongs to the BPG-independent phosphoglycerate mutase family. As to quaternary structure, monomer. It depends on Mn(2+) as a cofactor.

It catalyses the reaction (2R)-2-phosphoglycerate = (2R)-3-phosphoglycerate. It participates in carbohydrate degradation; glycolysis; pyruvate from D-glyceraldehyde 3-phosphate: step 3/5. In terms of biological role, catalyzes the interconversion of 2-phosphoglycerate and 3-phosphoglycerate. This is 2,3-bisphosphoglycerate-independent phosphoglycerate mutase from Legionella pneumophila (strain Corby).